We begin with the raw amino-acid sequence, 346 residues long: Phosphoribosylformylglycinamidine cyclo-ligase (346 aa).

This sequence belongs to the AIR synthase family.

The protein resides in the cytoplasm. The enzyme catalyses 2-formamido-N(1)-(5-O-phospho-beta-D-ribosyl)acetamidine + ATP = 5-amino-1-(5-phospho-beta-D-ribosyl)imidazole + ADP + phosphate + H(+). It functions in the pathway purine metabolism; IMP biosynthesis via de novo pathway; 5-amino-1-(5-phospho-D-ribosyl)imidazole from N(2)-formyl-N(1)-(5-phospho-D-ribosyl)glycinamide: step 2/2. The chain is Phosphoribosylformylglycinamidine cyclo-ligase from Aliivibrio fischeri (strain ATCC 700601 / ES114) (Vibrio fischeri).